The primary structure comprises 90 residues: MATSAAAVQDEPATKFAKDQLKAIIERIERLEEEKKTISDDIRDVYAEAKGNGYDVKALRTIVRMRKQDANERAEQETILETYMQALGML.

It belongs to the UPF0335 family.

This is UPF0335 protein RPB_1426 from Rhodopseudomonas palustris (strain HaA2).